The sequence spans 152 residues: Ribosome maturation factor RimP (152 aa).

The protein belongs to the RimP family.

The protein localises to the cytoplasm. Its function is as follows. Required for maturation of 30S ribosomal subunits. In Pseudomonas putida (strain GB-1), this protein is Ribosome maturation factor RimP.